We begin with the raw amino-acid sequence, 466 residues long: Ribulose bisphosphate carboxylase large chain (466 aa).

Lysine 5 is modified (N6,N6,N6-trimethyllysine). Residues asparagine 114 and threonine 164 each coordinate substrate. Residue lysine 166 is the Proton acceptor of the active site. Residue lysine 168 participates in substrate binding. Residues lysine 192, aspartate 194, and glutamate 195 each contribute to the Mg(2+) site. Lysine 192 is modified (N6-carboxylysine). Histidine 285 serves as the catalytic Proton acceptor. Positions 286, 318, and 370 each coordinate substrate.

This sequence belongs to the RuBisCO large chain family. Type I subfamily. As to quaternary structure, heterohexadecamer of 8 large chains and 8 small chains; disulfide-linked. The disulfide link is formed within the large subunit homodimers. Mg(2+) is required as a cofactor. In terms of processing, the disulfide bond which can form in the large chain dimeric partners within the hexadecamer appears to be associated with oxidative stress and protein turnover.

Its subcellular location is the plastid. The protein localises to the chloroplast. It catalyses the reaction 2 (2R)-3-phosphoglycerate + 2 H(+) = D-ribulose 1,5-bisphosphate + CO2 + H2O. It carries out the reaction D-ribulose 1,5-bisphosphate + O2 = 2-phosphoglycolate + (2R)-3-phosphoglycerate + 2 H(+). In terms of biological role, ruBisCO catalyzes two reactions: the carboxylation of D-ribulose 1,5-bisphosphate, the primary event in carbon dioxide fixation, as well as the oxidative fragmentation of the pentose substrate in the photorespiration process. Both reactions occur simultaneously and in competition at the same active site. This chain is Ribulose bisphosphate carboxylase large chain, found in Cercidiphyllum japonicum (Katsura tree).